The following is a 261-amino-acid chain: uncharacterized protein (261 aa).

The ABC transporter domain maps to 1–236; sequence MEIKEITIIG…SRKINEVDNW (236 aa). 36 to 43 is a binding site for ATP; the sequence is GPTGSGKS.

This sequence belongs to the ABC transporter superfamily.

This is an uncharacterized protein from Methanocaldococcus jannaschii (strain ATCC 43067 / DSM 2661 / JAL-1 / JCM 10045 / NBRC 100440) (Methanococcus jannaschii).